We begin with the raw amino-acid sequence, 693 residues long: Elongation factor G (693 aa).

In terms of domain architecture, tr-type G spans 8–283; it reads PQQRNIGIMA…AVVEYLPSPV (276 aa). GTP-binding positions include 17 to 24, 81 to 85, and 135 to 138; these read AHIDAGKT, DTPGH, and NKMD.

Belongs to the TRAFAC class translation factor GTPase superfamily. Classic translation factor GTPase family. EF-G/EF-2 subfamily.

It localises to the cytoplasm. Catalyzes the GTP-dependent ribosomal translocation step during translation elongation. During this step, the ribosome changes from the pre-translocational (PRE) to the post-translocational (POST) state as the newly formed A-site-bound peptidyl-tRNA and P-site-bound deacylated tRNA move to the P and E sites, respectively. Catalyzes the coordinated movement of the two tRNA molecules, the mRNA and conformational changes in the ribosome. The chain is Elongation factor G from Oleidesulfovibrio alaskensis (strain ATCC BAA-1058 / DSM 17464 / G20) (Desulfovibrio alaskensis).